The primary structure comprises 945 residues: Isoleucine--tRNA ligase (945 aa).

The 'HIGH' region motif lies at 66–76 (PYANGDIHLGH). Residue E581 participates in L-isoleucyl-5'-AMP binding. The 'KMSKS' region signature appears at 622 to 626 (KMSKS). Position 625 (K625) interacts with ATP. C908, C911, C928, and C931 together coordinate Zn(2+).

This sequence belongs to the class-I aminoacyl-tRNA synthetase family. IleS type 1 subfamily. Monomer. Requires Zn(2+) as cofactor.

It localises to the cytoplasm. The catalysed reaction is tRNA(Ile) + L-isoleucine + ATP = L-isoleucyl-tRNA(Ile) + AMP + diphosphate. Its function is as follows. Catalyzes the attachment of isoleucine to tRNA(Ile). As IleRS can inadvertently accommodate and process structurally similar amino acids such as valine, to avoid such errors it has two additional distinct tRNA(Ile)-dependent editing activities. One activity is designated as 'pretransfer' editing and involves the hydrolysis of activated Val-AMP. The other activity is designated 'posttransfer' editing and involves deacylation of mischarged Val-tRNA(Ile). The polypeptide is Isoleucine--tRNA ligase (Burkholderia vietnamiensis (strain G4 / LMG 22486) (Burkholderia cepacia (strain R1808))).